The primary structure comprises 269 residues: Phosphonoacetaldehyde hydrolase (269 aa).

D10 serves as the catalytic Nucleophile. Positions 10 and 12 each coordinate Mg(2+). K52 acts as the Schiff-base intermediate with substrate in catalysis. D186 contributes to the Mg(2+) binding site.

The protein belongs to the HAD-like hydrolase superfamily. PhnX family. In terms of assembly, homodimer. The cofactor is Mg(2+).

The catalysed reaction is phosphonoacetaldehyde + H2O = acetaldehyde + phosphate + H(+). In terms of biological role, involved in phosphonate degradation. The sequence is that of Phosphonoacetaldehyde hydrolase from Salmonella agona (strain SL483).